We begin with the raw amino-acid sequence, 363 residues long: MSKKPVLNLDTSNGFSEEYISHPERNDNQGIVEITDLVFSSESKLTQRKESRDSKTFVPSFLEELDDDHLHELVTNGGILYMNSLGEGVSGSVRKCRIRGTQMIFAMKTVLAAPNTALQKQLLRELKINRSCTSPYIVKYYGACYNNAECQLNIAMEYCGAGSLDAIYKRVRSQGGRTGERPLGKIAFGVLSGLSYLHDRKIIHRDIKPSNILLTSKGQVKLCDFGVSGELVNSLAGTFTGTSYYMAPERISGGSYTISSDIWSLGLTLMEVALNRFPFPPEGSPPPMPIELLSYIINMPPPLLPQEPGIKWSKSFQHFLCVCLDKDKTRRPGPQKMLTHPWVKAFERIHVDMEEFLRQVWSD.

Positions 79-343 constitute a Protein kinase domain; it reads ILYMNSLGEG…PQKMLTHPWV (265 aa). Residues 85–93 and K108 each bind ATP; that span reads LGEGVSGSV. D206 (proton acceptor) is an active-site residue. S234 bears the Phosphoserine mark. T238 bears the Phosphothreonine mark.

Belongs to the protein kinase superfamily. STE Ser/Thr protein kinase family. MAP kinase kinase subfamily.

The catalysed reaction is L-seryl-[protein] + ATP = O-phospho-L-seryl-[protein] + ADP + H(+). The enzyme catalyses L-threonyl-[protein] + ATP = O-phospho-L-threonyl-[protein] + ADP + H(+). It carries out the reaction L-tyrosyl-[protein] + ATP = O-phospho-L-tyrosyl-[protein] + ADP + H(+). With respect to regulation, activated by mkh1. Functionally, involved in the mkh1 signal transduction pathway that plays a role in cell wall integrity. Activates spm1/pmk1 via phosphorylation. This chain is MAP kinase kinase skh1/pek1 (skh1), found in Schizosaccharomyces pombe (strain 972 / ATCC 24843) (Fission yeast).